A 154-amino-acid polypeptide reads, in one-letter code: Interleukin-7 (154 aa).

Residues 1-25 (MFHVSFRYIFGIPPLILVLLPVTSS) form the signal peptide. 3 disulfide bridges follow: C27–C145, C58–C133, and C71–C116. Residues N94 and N115 are each glycosylated (N-linked (GlcNAc...) asparagine).

Belongs to the IL-7/IL-9 family. As to quaternary structure, interacts with IL7R and CSF2RG. Three disulfide bonds are present.

The protein resides in the secreted. Functionally, hematopoietic cytokine that plays an essential role in the development, expansion, and survival of naive and memory T-cells and B-cells thereby regulating the number of mature lymphocytes and maintaining lymphoid homeostasis. Mechanistically, exerts its biological effects through a receptor composed of IL7RA subunit and the cytokine receptor common subunit gamma/CSF2RG. Binding to the receptor leads to activation of various kinases including JAK1 or JAK3 depending on the cell type and subsequently propagation of signals through activation of several downstream signaling pathways including the PI3K/Akt/mTOR or the JAK-STAT5. This Rattus norvegicus (Rat) protein is Interleukin-7 (Il7).